The following is a 98-amino-acid chain: Secreted LysM effector Mgx1LysM (98 aa).

An N-terminal signal peptide occupies residues 1 to 18; the sequence is MKVTTIIAALLSVAVVDA. Cystine bridges form between C31–C89 and C62–C97. The region spanning 37 to 85 is the LysM domain; that stretch reads IPYVVKKGDTLTHIAHDIYKRKVGICDLAYTNHIGKNPNLIYAGQTLLI. Chitin contacts are provided by G44, T48, N75, and I77.

The protein belongs to the secreted LysM effector family. Forms homodimers in a chitin-independent manner through interactions at the N-termini of Mgx1LysM monomers. Homodimers are further polymerized in a chitin-dependent manner.

The protein localises to the secreted. It localises to the cell wall. Its function is as follows. Secreted effector that enables the plant pathogenic fungus to manipulate host defenses for successful infection. Binds chitin and suppresses the chitin-induced reactive oxygen species (ROS) burst. Chitin-induced polymerization of homodimers forms a contiguous Mg1LysM highly oligomeric super-complexe that is anchored to the chitin in the fungal cell wall to prevent hydrolysis by host chitinases. This chain is Secreted LysM effector Mgx1LysM, found in Zymoseptoria tritici (strain ST99CH_3D7).